The following is a 505-amino-acid chain: Maturase K (505 aa).

Belongs to the intron maturase 2 family. MatK subfamily.

The protein resides in the plastid. It localises to the chloroplast. Usually encoded in the trnK tRNA gene intron. Probably assists in splicing its own and other chloroplast group II introns. The sequence is that of Maturase K from Calycanthus occidentalis (Spice bush).